Consider the following 256-residue polypeptide: Phosphatidylglycerol--prolipoprotein diacylglyceryl transferase (256 aa).

The next 3 membrane-spanning stretches (helical) occupy residues 19–39, 56–76, and 91–111; these read VHWY…LGYW, LIFY…MLFY, and IWEG…AAWL. R139 is a binding site for a 1,2-diacyl-sn-glycero-3-phospho-(1'-sn-glycerol). A helical membrane pass occupies residues 231–251; that stretch reads FGWLTMGQVLSIPMLLIGIWL.

It belongs to the Lgt family.

It is found in the cell inner membrane. It catalyses the reaction L-cysteinyl-[prolipoprotein] + a 1,2-diacyl-sn-glycero-3-phospho-(1'-sn-glycerol) = an S-1,2-diacyl-sn-glyceryl-L-cysteinyl-[prolipoprotein] + sn-glycerol 1-phosphate + H(+). Its pathway is protein modification; lipoprotein biosynthesis (diacylglyceryl transfer). Functionally, catalyzes the transfer of the diacylglyceryl group from phosphatidylglycerol to the sulfhydryl group of the N-terminal cysteine of a prolipoprotein, the first step in the formation of mature lipoproteins. The chain is Phosphatidylglycerol--prolipoprotein diacylglyceryl transferase from Legionella pneumophila subsp. pneumophila (strain Philadelphia 1 / ATCC 33152 / DSM 7513).